Reading from the N-terminus, the 479-residue chain is Beta-amyrin 28-monooxygenase (479 aa).

Residues 5–25 (FYLSLLLLFVTFISLSLFFIF) traverse the membrane as a helical segment. Cys-426 is a heme binding site.

It belongs to the cytochrome P450 family. Heme serves as cofactor. In terms of tissue distribution, expressed in roots, nodules and flowers.

The protein resides in the membrane. The enzyme catalyses beta-amyrin + 3 reduced [NADPH--hemoprotein reductase] + 3 O2 = oleanolate + 3 oxidized [NADPH--hemoprotein reductase] + 4 H2O + 4 H(+). Its function is as follows. Catalyzes the carboxylation of beta-amyrin at the C-28 position to form oleanolic acid. Involved in an early step in the hemolytic saponin biosynthetic pathway. Catalyzes the carboxylation of alpha-amyrin and lupeol at the C-28 position to form ursolic acid and betulinic acid respectively. The chain is Beta-amyrin 28-monooxygenase from Medicago truncatula (Barrel medic).